We begin with the raw amino-acid sequence, 162 residues long: Protein-export protein SecB (162 aa).

Belongs to the SecB family. Homotetramer, a dimer of dimers. One homotetramer interacts with 1 SecA dimer.

The protein localises to the cytoplasm. Its function is as follows. One of the proteins required for the normal export of preproteins out of the cell cytoplasm. It is a molecular chaperone that binds to a subset of precursor proteins, maintaining them in a translocation-competent state. It also specifically binds to its receptor SecA. The sequence is that of Protein-export protein SecB from Legionella pneumophila (strain Paris).